The following is an 85-amino-acid chain: uncharacterized protein (85 aa).

This is an uncharacterized protein from Acidianus filamentous virus 2 (isolate Italy/Pozzuoli) (AFV-2).